A 555-amino-acid polypeptide reads, in one-letter code: uncharacterized protein (555 aa).

2 ABC transporter domains span residues 4 to 244 (VKVK…PPYK) and 255 to 547 (IQVR…ARFM). ATP contacts are provided by residues 36–43 (GKSGAGKS) and 292–299 (GPSGVGKT).

This sequence belongs to the ABC transporter superfamily.

This is an uncharacterized protein from Methanocaldococcus jannaschii (strain ATCC 43067 / DSM 2661 / JAL-1 / JCM 10045 / NBRC 100440) (Methanococcus jannaschii).